Here is a 172-residue protein sequence, read N- to C-terminus: DNA-directed RNA polymerase II subunit RPB7 (172 aa).

The protein belongs to the eukaryotic RPB7/RPC8 RNA polymerase subunit family. As to quaternary structure, component of the RNA polymerase II (Pol II) core complex consisting of 12 subunits: a ten-subunit catalytic core composed of POLR2A/RPB1, POLR2B/RPB2, POLR2C/RPB3, POLR2I/RPB9, POLR2J/RPB11, POLR2E/RPABC1, POLR2F/RPABC2, POLR2H/RPABC3, POLR2K/RPABC4 and POLR2L/RPABC5 and a mobile stalk composed of two subunits POLR2D/RPB4 and POLR2G/RPB7, protruding from the core and functioning primarily in transcription initiation. Part of Pol II(G) complex, in which Pol II core associates with an additional subunit POLR2M; unlike conventional Pol II, Pol II(G) functions as a transcriptional repressor. Part of TBP-based Pol II pre-initiation complex (PIC), in which Pol II core assembles with general transcription factors and other specific initiation factors including GTF2E1, GTF2E2, GTF2F1, GTF2F2, TCEA1, ERCC2, ERCC3, GTF2H2, GTF2H3, GTF2H4, GTF2H5, GTF2A1, GTF2A2, GTF2B and TBP; this large multi-subunit PIC complex mediates DNA unwinding and targets Pol II core to the transcription start site where the first phosphodiester bond forms.

The protein resides in the nucleus. Its function is as follows. Core component of RNA polymerase II (Pol II), a DNA-dependent RNA polymerase which synthesizes mRNA precursors and many functional non-coding RNAs using the four ribonucleoside triphosphates as substrates. Pol II is the central component of the basal RNA polymerase II transcription machinery. It is composed of mobile elements that move relative to each other. POLR2G/RPB7 is part of a subcomplex with POLR2D/RPB4 that binds to a pocket formed by POLR2A/RPB1, POLR2B/RPB2 and POLR2F/RPABC2 at the base of the clamp element. The POLR2D/RPB4-POLR2G/RPB7 subcomplex seems to lock the clamp via POLR2G/RPB7 in the closed conformation thus preventing double-stranded DNA to enter the active site cleft. The POLR2D/RPB4-POLR2G/RPB7 subcomplex binds single-stranded DNA and RNA. The protein is DNA-directed RNA polymerase II subunit RPB7 (POLR2G) of Bos taurus (Bovine).